Reading from the N-terminus, the 191-residue chain is Elongation factor P (191 aa).

It belongs to the elongation factor P family.

It localises to the cytoplasm. It participates in protein biosynthesis; polypeptide chain elongation. Its function is as follows. Involved in peptide bond synthesis. Stimulates efficient translation and peptide-bond synthesis on native or reconstituted 70S ribosomes in vitro. Probably functions indirectly by altering the affinity of the ribosome for aminoacyl-tRNA, thus increasing their reactivity as acceptors for peptidyl transferase. The polypeptide is Elongation factor P (Bartonella henselae (strain ATCC 49882 / DSM 28221 / CCUG 30454 / Houston 1) (Rochalimaea henselae)).